A 116-amino-acid chain; its full sequence is Transcription elongation factor SPT4 homolog 1 (116 aa).

The segment at 19 to 39 adopts a C4-type zinc-finger fold; that stretch reads CLRCRLVKTYDQFRDSGCENC.

Belongs to the SPT4 family.

It localises to the nucleus. Functionally, may regulate transcription elongation by RNA polymerase II. May enhance transcriptional pausing at sites proximal to the promoter, which may in turn facilitate the assembly of an elongation competent RNA polymerase II complex. The polypeptide is Transcription elongation factor SPT4 homolog 1 (Arabidopsis thaliana (Mouse-ear cress)).